The chain runs to 178 residues: Cytidylate kinase (178 aa).

Position 7 to 15 (7 to 15 (GLPGTGTTT)) interacts with ATP.

This sequence belongs to the cytidylate kinase family. Type 2 subfamily.

It is found in the cytoplasm. It carries out the reaction CMP + ATP = CDP + ADP. The catalysed reaction is dCMP + ATP = dCDP + ADP. The polypeptide is Cytidylate kinase (Methanococcus maripaludis (strain C5 / ATCC BAA-1333)).